We begin with the raw amino-acid sequence, 285 residues long: Phosphate import ATP-binding protein PstB (285 aa).

Residues 39–280 (LEVSDLQLWY…PAKKQTEDYI (242 aa)) form the ABC transporter domain. 71-78 (GPSGCGKS) serves as a coordination point for ATP.

This sequence belongs to the ABC transporter superfamily. Phosphate importer (TC 3.A.1.7) family. As to quaternary structure, the complex is composed of two ATP-binding proteins (PstB), two transmembrane proteins (PstC and PstA) and a solute-binding protein (PstS).

The protein localises to the cell inner membrane. It catalyses the reaction phosphate(out) + ATP + H2O = ADP + 2 phosphate(in) + H(+). Functionally, part of the ABC transporter complex PstSACB involved in phosphate import. Responsible for energy coupling to the transport system. This Alkalilimnicola ehrlichii (strain ATCC BAA-1101 / DSM 17681 / MLHE-1) protein is Phosphate import ATP-binding protein PstB.